The following is a 248-amino-acid chain: Amphiregulin (248 aa).

The signal sequence occupies residues Met1–Ala26. Positions Leu27–Gln99 are excised as a propeptide. 3 disordered regions span residues Leu29–Gly48, Val57–Ser77, and Val100–Lys136. A compositionally biased stretch (polar residues) spans Ser58–Ser70. The segment covering Val100–Lys116 has biased composition (basic and acidic residues). Asn106 is a glycosylation site (N-linked (GlcNAc...) asparagine). Over residues Pro117 to Lys136 the composition is skewed to basic residues. One can recognise an EGF-like domain in the interval Lys135–Gly175. Disulfide bonds link Cys139/Cys152, Cys147/Cys163, and Cys165/Cys174. Residues Ile192–Ile215 traverse the membrane as a helical segment. The N-linked (GlcNAc...) asparagine glycan is linked to Asn241.

It belongs to the amphiregulin family. The immature precursor interacts with CNIH.

The protein resides in the membrane. Its function is as follows. Ligand of the EGF receptor/EGFR. Autocrine growth factor as well as a mitogen for a broad range of target cells including astrocytes, Schwann cells and fibroblasts. The protein is Amphiregulin (Areg) of Mus musculus (Mouse).